The sequence spans 305 residues: Putative lipid kinase SAR0780 (305 aa).

The DAGKc domain occupies 3–139; the sequence is NKYTHGVLFY…YDVIKINNQY (137 aa). ATP is bound by residues S44, 74-80, and T101; that span reads GDGTVNE. Residues S220, D223, and E225 each contribute to the Mg(2+) site. Residue E281 is the Proton acceptor of the active site.

The protein belongs to the diacylglycerol/lipid kinase family. Mg(2+) serves as cofactor.

Its function is as follows. May catalyze the ATP-dependent phosphorylation of lipids other than diacylglycerol (DAG). In fact, is not able to exhibit diacylglycerol kinase activity in vitro. This Staphylococcus aureus (strain MRSA252) protein is Putative lipid kinase SAR0780.